Reading from the N-terminus, the 331-residue chain is ESX-3 secretion system protein EccE3 (331 aa).

Helical transmembrane passes span 11 to 31 and 37 to 57; these read GRVTLVLLAVVPVALAYPWQS and LLGVAAAVVIGLFGFWRGLYF.

The protein belongs to the EccE family. In terms of assembly, part of the ESX-3 / type VII secretion system (T7SS), which is composed of cytosolic and membrane components. The ESX-3 membrane complex is composed of EccB3, EccC3, EccD3 and EccE3.

The protein localises to the cell inner membrane. Its function is as follows. Part of the ESX-3 specialized secretion system, which is important for iron and zinc uptake or homeostasis. This is ESX-3 secretion system protein EccE3 from Mycobacterium tuberculosis (strain ATCC 25618 / H37Rv).